Here is a 942-residue protein sequence, read N- to C-terminus: Isoleucine--tRNA ligase (942 aa).

Residues 58–68 carry the 'HIGH' region motif; that stretch reads PYANGDIHLGH. Residue glutamate 567 coordinates L-isoleucyl-5'-AMP. A 'KMSKS' region motif is present at residues 608 to 612; it reads KMSKS. Lysine 611 provides a ligand contact to ATP. Residues cysteine 905, cysteine 908, cysteine 925, and cysteine 928 each coordinate Zn(2+).

It belongs to the class-I aminoacyl-tRNA synthetase family. IleS type 1 subfamily. Monomer. Requires Zn(2+) as cofactor.

The protein resides in the cytoplasm. It catalyses the reaction tRNA(Ile) + L-isoleucine + ATP = L-isoleucyl-tRNA(Ile) + AMP + diphosphate. Functionally, catalyzes the attachment of isoleucine to tRNA(Ile). As IleRS can inadvertently accommodate and process structurally similar amino acids such as valine, to avoid such errors it has two additional distinct tRNA(Ile)-dependent editing activities. One activity is designated as 'pretransfer' editing and involves the hydrolysis of activated Val-AMP. The other activity is designated 'posttransfer' editing and involves deacylation of mischarged Val-tRNA(Ile). The chain is Isoleucine--tRNA ligase from Pseudoalteromonas translucida (strain TAC 125).